We begin with the raw amino-acid sequence, 277 residues long: Glycerol-3-phosphate acyltransferase (277 aa).

Transmembrane regions (helical) follow at residues leucine 3–valine 23, isoleucine 55–leucine 75, proline 79–phenylalanine 99, isoleucine 111–leucine 131, and leucine 155–leucine 175. The disordered stretch occupies residues serine 207 to glutamate 277. Residues phenylalanine 216–lysine 239 show a composition bias toward basic and acidic residues. Composition is skewed to basic residues over residues lysine 240–threonine 253 and lysine 262–lysine 271.

This sequence belongs to the PlsY family. As to quaternary structure, probably interacts with PlsX.

The protein localises to the cell inner membrane. The enzyme catalyses an acyl phosphate + sn-glycerol 3-phosphate = a 1-acyl-sn-glycero-3-phosphate + phosphate. The protein operates within lipid metabolism; phospholipid metabolism. In terms of biological role, catalyzes the transfer of an acyl group from acyl-phosphate (acyl-PO(4)) to glycerol-3-phosphate (G3P) to form lysophosphatidic acid (LPA). This enzyme utilizes acyl-phosphate as fatty acyl donor, but not acyl-CoA or acyl-ACP. This Legionella pneumophila subsp. pneumophila (strain Philadelphia 1 / ATCC 33152 / DSM 7513) protein is Glycerol-3-phosphate acyltransferase.